A 977-amino-acid chain; its full sequence is Serine/threonine-protein kinase/endoribonuclease IRE1 (977 aa).

The signal sequence occupies residues 1–20; the sequence is MPARWLLLLLALLLPPPGPG. The Lumenal portion of the chain corresponds to 21–445; that stretch reads SFGRTSTVTL…EAPVDSMLKD (425 aa). A glycan (N-linked (GlcNAc...) asparagine) is linked at N178. A helical membrane pass occupies residues 446-466; sequence MATIILSTFLLVGWVAFIITY. The Cytoplasmic segment spans residues 467–977; the sequence is PLSVHQQRQL…PQPPVIPYAL (511 aa). Residues 498–559 are disordered; the sequence is FHPHGDLTQD…PSLEQDDEDE (62 aa). A compositionally biased stretch (low complexity) spans 513 to 551; the sequence is SSGPFSESSGTSSPSPSPRASNHSLHPSSSASRAGTSPS. In terms of domain architecture, Protein kinase spans 571-832; the sequence is FCPKDVLGHG…AKHVLKHPFF (262 aa). Residues 577-585, K599, and 643-645 contribute to the ATP site; these read LGHGAEGTI and ELC. The active-site Proton acceptor; for protein kinase activity is the D688. ATP is bound by residues 690–693 and D711; that span reads KPHN. S724 and S729 each carry phosphoserine. Residues 835–963 enclose the KEN domain; sequence LEKQLQFFQD…ERLFQTYYWH (129 aa). The segment at 906-907 is interacts with hydroxy-aryl-aldehyde inhibitors; that stretch reads NK.

Belongs to the protein kinase superfamily. Ser/Thr protein kinase family. Monomer. Homodimer; disulfide-linked; homodimerization takes place in response to endoplasmic reticulum stress and promotes activation of the kinase and endoribonuclease activities. Dimer formation is driven by hydrophobic interactions within the N-terminal luminal domains and stabilized by disulfide bridges. Interacts (via the luminal region) with DNAJB9/ERdj4; interaction takes place in unstressed cells and promotes recruitment of HSPA5/BiP. Interacts (via the luminal region) with HSPA5/BiP; HSPA5/BiP is a negative regulator of the unfolded protein response (UPR) that prevents homodimerization of ERN1/IRE1 and subsequent activation of the protein. Interaction with HSPA5 also competitively inhibits ERN1 interaction with MANF. Interacts with PDIA6, a negative regulator of the UPR; the interaction is direct and disrupts homodimerization. Interacts with DAB2IP (via PH domain); the interaction occurs in a endoplasmic reticulum stress-induced dependent manner and is required for subsequent recruitment of TRAF2 to ERN1/IRE1. Interacts with TAOK3 and TRAF2. Interacts with RNF13. Interacts with LACC1. Interacts (when unphosphorylated) with DDRGK1; interaction is dependent on UFM1 and takes place in response to endoplasmic reticulum stress, regulating ERN1/IRE1-alpha stability. Interacts (via N-terminus) with P4HB/PDIA1; the interaction is enhanced by phosphorylation of P4HB by FAM20C in response to endoplasmic reticulum stress and results in attenuation of ERN1 activity. Interacts with TMBIM6; this interaction inhibits ERN1 activity. Interacts (via luminal domain) with MANF (via C-terminus); the interaction is decreased in the presence of increasing concentrations of Ca(2+). Mg(2+) is required as a cofactor. Autophosphorylated following homodimerization. Autophosphorylation promotes activation of the endoribonuclease domain. In response to ER stress, phosphorylated at Ser-724, Ser-729 and possibly Ser-726; phosphorylation promotes oligomerization and endoribonuclease activity. Dephosphorylated at Ser-724, Ser-729 and possibly Ser-726 by RPAP2 to abort failed ER-stress adaptation and trigger apoptosis. Phosphorylated at Ser-724; in response to the ER stressor tunicamycin. Post-translationally, ADP-ribosylated by PARP16 upon ER stress, which increases both kinase and endonuclease activities. As to expression, expressed in liver (at protein level). Ubiquitously expressed. High levels in thymus, liver and lung. In the brain, preferentially expressed in cortical, hippocampal and olfactory neurons.

The protein resides in the endoplasmic reticulum membrane. It carries out the reaction L-seryl-[protein] + ATP = O-phospho-L-seryl-[protein] + ADP + H(+). The catalysed reaction is L-threonyl-[protein] + ATP = O-phospho-L-threonyl-[protein] + ADP + H(+). The kinase domain is activated by trans-autophosphorylation following homodimerization. Kinase activity is required for activation of the endoribonuclease domain. Endoribonuclease activity is specifically inhibited by hydroxy-aryl-aldehydes (HAA) MKC9989, OICR464 and OICR573. In terms of biological role, serine/threonine-protein kinase and endoribonuclease that acts as a key sensor for the endoplasmic reticulum unfolded protein response (UPR). In unstressed cells, the endoplasmic reticulum luminal domain is maintained in its inactive monomeric state by binding to the endoplasmic reticulum chaperone HSPA5/BiP. Accumulation of misfolded protein in the endoplasmic reticulum causes release of HSPA5/BiP, allowing the luminal domain to homodimerize, promoting autophosphorylation of the kinase domain and subsequent activation of the endoribonuclease activity. The endoribonuclease activity is specific for XBP1 mRNA and excises 26 nucleotides from XBP1 mRNA. The resulting spliced transcript of XBP1 encodes a transcriptional activator protein that up-regulates expression of UPR target genes. Acts as an upstream signal for ER stress-induced GORASP2-mediated unconventional (ER/Golgi-independent) trafficking of CFTR to cell membrane by modulating the expression and localization of SEC16A. This is Serine/threonine-protein kinase/endoribonuclease IRE1 from Mus musculus (Mouse).